The primary structure comprises 133 residues: Ribosome-binding factor A (133 aa).

This sequence belongs to the RbfA family. In terms of assembly, monomer. Binds 30S ribosomal subunits, but not 50S ribosomal subunits or 70S ribosomes.

It is found in the cytoplasm. Its function is as follows. One of several proteins that assist in the late maturation steps of the functional core of the 30S ribosomal subunit. Associates with free 30S ribosomal subunits (but not with 30S subunits that are part of 70S ribosomes or polysomes). Required for efficient processing of 16S rRNA. May interact with the 5'-terminal helix region of 16S rRNA. This Salmonella typhimurium (strain LT2 / SGSC1412 / ATCC 700720) protein is Ribosome-binding factor A.